We begin with the raw amino-acid sequence, 458 residues long: Argininosuccinate lyase (458 aa).

Belongs to the lyase 1 family. Argininosuccinate lyase subfamily.

Its subcellular location is the cytoplasm. It carries out the reaction 2-(N(omega)-L-arginino)succinate = fumarate + L-arginine. It participates in amino-acid biosynthesis; L-arginine biosynthesis; L-arginine from L-ornithine and carbamoyl phosphate: step 3/3. The protein is Argininosuccinate lyase of Neisseria meningitidis serogroup C / serotype 2a (strain ATCC 700532 / DSM 15464 / FAM18).